The primary structure comprises 973 residues: MCELNNKRVSWSKTGLIAYADEQSTYGNLCISFLETINGVNCRFHPPQRYVIHPQLHEVPLKTETGNGINGASGSSTAQSNIHGTTSVPGSAGKHQHQFFYDISSIHWNNWFSLPGDMLAVCDELGNMTMLIAGQSPDGPTTLDKLTMLFQDNVYKIHNHVMQLEPERENTDSKLERKKTKKEYNTTILDFHWLSSSKPVIVSQFCAFDSSINMYRNKAQQLSPHGIFHPPFMKYAGLAIRRNGQLDFWYQFSNSKDHKKITLQLFNPHNERSKGLDFLQYAKITSVNNDNSILITTYSRLTGKLSFYKLFVDWNVNTAKPVVLNDPSLKIKHILDATVDQTDDEGRILDFTHVHVLAKVVAEKDAAPEVLLAYDVVGTPESLIKRFKLGQVRLPLDYLGILKPELNTSNENHNQALRSNRSNLRFLGVLNLHHKVASISSEVLDGFVSFYYRNGEIEIYNQNDWKLETERLLNQGPQGKFSNIITSILSAGFKYPTIKNLGTVEWIRVSPAMAGILYKYRHDDLPQFQPMNIDDVSDKSKDEINAATMAFGYVTSAHRQLSGEDIALACKQHILKIAKIDEKRAKDFTTTLMFNLYNFFNFSPGAPKELMDKIISSRPLQKVMLLQLELGSIFTDENTCEMARVILYLKNVSFAFNGVARNLQFAIEQMTNSTNSSNPPLSGDKFFQTAFSKQDLVHSLIPVTKWFVKFITYLIQQILILTNDPENPDNRLVLGVFGAKIPRTLILTILKEIKNVTAIITKFPETNYPILNESSTYLKMLLIESPINFEKFETFLMDVNNKLSAFSEQQPSIMREPTLLVRSSVPNELNKITEFLLQYSSNTVISHADASAIYFSDTSGLRISCDEFFEPGVHRLLQPIEDGIVIDEKNMPATFRDSKTFTKLTYDGITYDRFSKEELSDNKLKRCNRCGAVTKAGYPIPTNKTIVPTSISTRRWPTMYTRMCICLGMLYEL.

It belongs to the Mediator complex subunit 16 family. Component of the Mediator complex.

It localises to the nucleus. Its function is as follows. Component of the Mediator complex, a coactivator involved in the regulated transcription of nearly all RNA polymerase II-dependent genes. Mediator functions as a bridge to convey information from gene-specific regulatory proteins to the basal RNA polymerase II transcription machinery. Mediator is recruited to promoters by direct interactions with regulatory proteins and serves as a scaffold for the assembly of a functional preinitiation complex with RNA polymerase II and the general transcription factors. The protein is Mediator of RNA polymerase II transcription subunit 16 (SIN4) of Candida glabrata (strain ATCC 2001 / BCRC 20586 / JCM 3761 / NBRC 0622 / NRRL Y-65 / CBS 138) (Yeast).